The sequence spans 59 residues: Large ribosomal subunit protein bL32 (59 aa).

The segment at 1 to 59 (MAVQQNRKTPSKRGMRRSHDALSGPALSVEPQTGETHRRHHVSPDGYYRGRKVMQGRED) is disordered. The span at 49 to 59 (RGRKVMQGRED) shows a compositional bias: basic residues.

Belongs to the bacterial ribosomal protein bL32 family.

In Alkalilimnicola ehrlichii (strain ATCC BAA-1101 / DSM 17681 / MLHE-1), this protein is Large ribosomal subunit protein bL32.